We begin with the raw amino-acid sequence, 229 residues long: Ribulose-phosphate 3-epimerase (229 aa).

A substrate-binding site is contributed by Ser-12. Positions 37, 39, and 70 each coordinate a divalent metal cation. Asp-39 serves as the catalytic Proton acceptor. Substrate-binding positions include His-70, 146 to 149 (GFTG), 181 to 183 (DGG), and 203 to 204 (AS). Asp-181 contacts a divalent metal cation. Asp-181 (proton donor) is an active-site residue.

The protein belongs to the ribulose-phosphate 3-epimerase family. A divalent metal cation serves as cofactor.

It carries out the reaction D-ribulose 5-phosphate = D-xylulose 5-phosphate. The protein operates within carbohydrate degradation. Functionally, catalyzes the reversible epimerization of D-ribulose 5-phosphate to D-xylulose 5-phosphate. The protein is Ribulose-phosphate 3-epimerase of Chlamydia pneumoniae (Chlamydophila pneumoniae).